Reading from the N-terminus, the 99-residue chain is Probable small ribosomal subunit protein cS23 (99 aa).

It belongs to the chloroplast-specific ribosomal protein cS23 family. Part of the 30S ribosomal subunit.

Probably a ribosomal protein or a ribosome-associated protein. The protein is Probable small ribosomal subunit protein cS23 of Synechococcus sp. (strain JA-3-3Ab) (Cyanobacteria bacterium Yellowstone A-Prime).